Reading from the N-terminus, the 418-residue chain is STE20-related kinase adapter protein beta (418 aa).

The 312-residue stretch at 58–369 (YELQVEIGRG…ASSLLSHVFF (312 aa)) folds into the Protein kinase domain. ATP contacts are provided by residues 64 to 72 (IGRGFDNLT) and K89.

It belongs to the protein kinase superfamily. STE Ser/Thr protein kinase family. STE20 subfamily. Component of a trimeric complex composed of STK11/LKB1, STRAD (STRADA or STRADB) and CAB39/MO25 (CAB39/MO25alpha or CAB39L/MO25beta): the complex tethers STK11/LKB1 in the cytoplasm and stimulates its catalytic activity. Interacts with BIRC4/XIAP. These two proteins are likely to coexist in a complex with TAK1, TRAF6, TAB1 and TAB2. Highly expressed in heart, skeletal muscle, testis, liver and colon.

It localises to the nucleus. The protein localises to the cytoplasm. Functionally, pseudokinase which, in complex with CAB39/MO25 (CAB39/MO25alpha or CAB39L/MO25beta), binds to and activates STK11/LKB1. Adopts a closed conformation typical of active protein kinases and binds STK11/LKB1 as a pseudosubstrate, promoting conformational change of STK11/LKB1 in an active conformation. This is STE20-related kinase adapter protein beta (STRADB) from Homo sapiens (Human).